Reading from the N-terminus, the 687-residue chain is uncharacterized protein (687 aa).

A run of 14 helical transmembrane segments spans residues 28 to 48 (IIFTALVFGVLVAATGQTIVV), 66 to 86 (WAVTSYLLGGTVVVVVAGKLG), 94 to 114 (VLLGSVVVFVVGSVLCGLSQT), 126 to 146 (GVGAGAISVTAYALAAEVVPL), 154 to 174 (GVLGAVFGVNTVTGPLLGGWL), 182 to 202 (WAFWINVPVSIAVLTVAATAV), 211 to 231 (PVIDYLGILVIAVATTALIMA), 243 to 263 (SATIVGLLIGAAVALGFFVWL), 287 to 307 (VLSFVVGFAMLGALTFVPIYL), 320 to 340 (LRTLPMVIGLLIASTGTGVLV), 348 to 368 (IFPVAGMALMAVAFLLMSQMD), 378 to 398 (LYLVVLGAGIGLSMQVLVLIV), 414 to 434 (VTFFRVVGASFGTATFGALFV), and 480 to 500 (LTQVFLCAVSVTVVGFILALL).

Belongs to the major facilitator superfamily. TCR/Tet family.

It is found in the cell membrane. This is an uncharacterized protein from Mycobacterium tuberculosis (strain CDC 1551 / Oshkosh).